Consider the following 431-residue polypeptide: Histidine--tRNA ligase (431 aa).

It belongs to the class-II aminoacyl-tRNA synthetase family. In terms of assembly, homodimer.

Its subcellular location is the cytoplasm. The enzyme catalyses tRNA(His) + L-histidine + ATP = L-histidyl-tRNA(His) + AMP + diphosphate + H(+). In Neisseria meningitidis serogroup C (strain 053442), this protein is Histidine--tRNA ligase.